The following is a 418-amino-acid chain: Lariat debranching enzyme (418 aa).

Positions 8, 10, 39, and 84 each coordinate a divalent metal cation. Positions 124–154 are lariat recognition loop; it reads SGIYNERHYRSGHFERPPYNESTIRSVYHVR. Residues histidine 174, histidine 226, and histidine 228 each coordinate a divalent metal cation. Residues 372–418 form a disordered region; the sequence is GERTDIPASLAPSDLPTYDSEEIPIDDIDEIEEMEEAKADDHTRDDA. The segment covering 390–406 has biased composition (acidic residues); the sequence is DSEEIPIDDIDEIEEME. Over residues 407–418 the composition is skewed to basic and acidic residues; that stretch reads EAKADDHTRDDA.

It belongs to the lariat debranching enzyme family. Fe(2+) serves as cofactor. It depends on Zn(2+) as a cofactor. Mn(2+) is required as a cofactor. In terms of tissue distribution, widely expressed. Expressed in roots, stems, cauline and rosette leaves, flower buds and siliques.

The protein localises to the nucleus. Its activity is regulated as follows. Active in presence of diverse metals including Fe(2+), Zn(2+), Mn(2+). Binds two metal cations in two adjacent alpha and beta metal-binding pockets. In terms of biological role, cleaves the 2'-5' phosphodiester linkage at the branch point of lariat intron pre-mRNAs after splicing and converts them into linear molecules that are subsequently degraded. It thereby facilitates ribonucleotide turnover. It may also participate in retrovirus replication via an RNA lariat intermediate in cDNA synthesis. Plays en essential role during embryogenesis. The chain is Lariat debranching enzyme (DBR1) from Arabidopsis thaliana (Mouse-ear cress).